Here is an 803-residue protein sequence, read N- to C-terminus: Na(+)/H(+) antiporter subunit A1 (803 aa).

19 helical membrane passes run 1–21 (MSLLHIAVILPLIFALIIPIL), 30–50 (LGWFVLPIPVVLFIYFLSLIS), 79–99 (LSILFSLLITGIGSLVVLYSI), 117–137 (LFMGAMLGVVLSDNLIILYLF), 166–186 (LIITVFGGLSLLGGFILISLA), 208–228 (FIFAMVLIMLGAFTKSAQVPF), 265–285 (LFAISQGWIWTITLVGLITLF), 300–320 (ILAFSTVSQLGMIMSMLGIGA), 337–357 (FTAAVFHLVNHATFKGALFMI), 377–397 (LTIMPISFTITVITALSMAGI), 427–447 (LGIVFPILAIVGSIFTFVYSI), 472–492 (ILMLLSPIILAVLVVVFGLFP), 522–542 (GITPAFISTLIIWILGILLLL), 591–611 (LVIIFGMLIVVTIVTLLSVPF), 621–641 (IHIYEIAILILLIIAAFMVVI), 646–666 (LFSVIMLGVVGYSVSVLFVFF), 671–691 (LALTQFVVESISTALFLLCFY), 707–727 (LTNALISIGVGLVVIILGLIA), and 764–784 (MDTLFESSVLGIAGLGVYTMI).

It belongs to the CPA3 antiporters (TC 2.A.63) subunit A family. In terms of assembly, may form a heterooligomeric complex that consists of seven subunits: mnhA1, mnhB1, mnhC1, mnhD1, mnhE1, mnhF1 and mnhG1.

Its subcellular location is the cell membrane. Mnh complex is a Na(+)/H(+) antiporter involved in Na(+) excretion. This chain is Na(+)/H(+) antiporter subunit A1 (mnhA1), found in Staphylococcus haemolyticus (strain JCSC1435).